The primary structure comprises 198 residues: Ribonuclease HII (198 aa).

Residues asparagine 11–valine 198 enclose the RNase H type-2 domain. A divalent metal cation is bound by residues aspartate 17, glutamate 18, and aspartate 109.

This sequence belongs to the RNase HII family. It depends on Mn(2+) as a cofactor. The cofactor is Mg(2+).

It localises to the cytoplasm. The catalysed reaction is Endonucleolytic cleavage to 5'-phosphomonoester.. Functionally, endonuclease that specifically degrades the RNA of RNA-DNA hybrids. The chain is Ribonuclease HII from Yersinia pseudotuberculosis serotype O:1b (strain IP 31758).